Here is a 213-residue protein sequence, read N- to C-terminus: uncharacterized protein (213 aa).

This is an uncharacterized protein from Acanthamoeba polyphaga mimivirus (APMV).